The primary structure comprises 495 residues: tRNA(Ile)-lysidine synthase (495 aa).

Residue 26-31 (SGGSDS) participates in ATP binding.

It belongs to the tRNA(Ile)-lysidine synthase family.

It is found in the cytoplasm. It carries out the reaction cytidine(34) in tRNA(Ile2) + L-lysine + ATP = lysidine(34) in tRNA(Ile2) + AMP + diphosphate + H(+). Ligates lysine onto the cytidine present at position 34 of the AUA codon-specific tRNA(Ile) that contains the anticodon CAU, in an ATP-dependent manner. Cytidine is converted to lysidine, thus changing the amino acid specificity of the tRNA from methionine to isoleucine. In Bartonella tribocorum (strain CIP 105476 / IBS 506), this protein is tRNA(Ile)-lysidine synthase.